A 290-amino-acid polypeptide reads, in one-letter code: Fructose-1,6-bisphosphatase class 1 (290 aa).

The Mg(2+) site is built by Glu-78, Asp-96, Leu-98, and Asp-99. Substrate-binding positions include 99–102 (DGSS), Tyr-201, and Lys-226. Glu-232 contributes to the Mg(2+) binding site.

It belongs to the FBPase class 1 family. In terms of assembly, homotetramer. The cofactor is Mg(2+).

It localises to the cytoplasm. The enzyme catalyses beta-D-fructose 1,6-bisphosphate + H2O = beta-D-fructose 6-phosphate + phosphate. It participates in carbohydrate biosynthesis; gluconeogenesis. The polypeptide is Fructose-1,6-bisphosphatase class 1 (Helicobacter pylori (strain HPAG1)).